Consider the following 125-residue polypeptide: MDHKPLLQERPPAYNLEAGQGDYACGPHGYGAIPAAPPPPPYPYLVTGIPTHHPRVYNIHSRTVTRYPANSIVVVGGCPVCRVGVLEDCFTFLGIFLAIILFPFGFICCFALRKRRCPNCGATFA.

Helical transmembrane passes span 67–86 and 92–112; these read YPANSIVVVGGCPVCRVGVL and FLGIFLAIILFPFGFICCFAL.

It belongs to the BRI3 family. As to quaternary structure, interacts with BRI3BP. Interacts with MGAT1 and IFITM3. In terms of assembly, interacts with BRI3BP, MGAT1 and IFITM3; the interactions are weaker than with isoform 1.

Its subcellular location is the lysosome membrane. It localises to the cytoplasm. The protein localises to the perinuclear region. The protein resides in the nucleus. Functionally, participates in tumor necrosis factor-alpha (TNF)-induced cell death. May be a target of Wnt/beta-catenin signaling in the liver. The protein is Membrane protein BRI3 (BRI3) of Homo sapiens (Human).